The primary structure comprises 103 residues: Integration host factor subunit beta (103 aa).

The tract at residues 59–82 (RLGRNPKTGESVALPGKHVPHFKP) is disordered.

This sequence belongs to the bacterial histone-like protein family. Heterodimer of an alpha and a beta chain.

In terms of biological role, this protein is one of the two subunits of integration host factor, a specific DNA-binding protein that functions in genetic recombination as well as in transcriptional and translational control. In Xanthomonas oryzae pv. oryzae (strain MAFF 311018), this protein is Integration host factor subunit beta.